We begin with the raw amino-acid sequence, 328 residues long: Phosphate acyltransferase (328 aa).

It belongs to the PlsX family. As to quaternary structure, homodimer. Probably interacts with PlsY.

It is found in the cytoplasm. It carries out the reaction a fatty acyl-[ACP] + phosphate = an acyl phosphate + holo-[ACP]. The protein operates within lipid metabolism; phospholipid metabolism. In terms of biological role, catalyzes the reversible formation of acyl-phosphate (acyl-PO(4)) from acyl-[acyl-carrier-protein] (acyl-ACP). This enzyme utilizes acyl-ACP as fatty acyl donor, but not acyl-CoA. The chain is Phosphate acyltransferase from Staphylococcus aureus (strain bovine RF122 / ET3-1).